Here is a 23-residue protein sequence, read N- to C-terminus: Cytochrome c oxidase subunit 7A-liver, mitochondrial (23 aa).

The protein belongs to the cytochrome c oxidase VIIa family. As to quaternary structure, component of the cytochrome c oxidase (complex IV, CIV), a multisubunit enzyme composed of 14 subunits. The complex is composed of a catalytic core of 3 subunits MT-CO1, MT-CO2 and MT-CO3, encoded in the mitochondrial DNA, and 11 supernumerary subunits COX4I, COX5A, COX5B, COX6A, COX6B, COX6C, COX7A, COX7B, COX7C, COX8 and NDUFA4, which are encoded in the nuclear genome. The complex exists as a monomer or a dimer and forms supercomplexes (SCs) in the inner mitochondrial membrane with NADH-ubiquinone oxidoreductase (complex I, CI) and ubiquinol-cytochrome c oxidoreductase (cytochrome b-c1 complex, complex III, CIII), resulting in different assemblies (supercomplex SCI(1)III(2)IV(1) and megacomplex MCI(2)III(2)IV(2)).

Its subcellular location is the mitochondrion inner membrane. It participates in energy metabolism; oxidative phosphorylation. Component of the cytochrome c oxidase, the last enzyme in the mitochondrial electron transport chain which drives oxidative phosphorylation. The respiratory chain contains 3 multisubunit complexes succinate dehydrogenase (complex II, CII), ubiquinol-cytochrome c oxidoreductase (cytochrome b-c1 complex, complex III, CIII) and cytochrome c oxidase (complex IV, CIV), that cooperate to transfer electrons derived from NADH and succinate to molecular oxygen, creating an electrochemical gradient over the inner membrane that drives transmembrane transport and the ATP synthase. Cytochrome c oxidase is the component of the respiratory chain that catalyzes the reduction of oxygen to water. Electrons originating from reduced cytochrome c in the intermembrane space (IMS) are transferred via the dinuclear copper A center (CU(A)) of subunit 2 and heme A of subunit 1 to the active site in subunit 1, a binuclear center (BNC) formed by heme A3 and copper B (CU(B)). The BNC reduces molecular oxygen to 2 water molecules using 4 electrons from cytochrome c in the IMS and 4 protons from the mitochondrial matrix. This Oncorhynchus mykiss (Rainbow trout) protein is Cytochrome c oxidase subunit 7A-liver, mitochondrial.